The chain runs to 255 residues: Uracil-DNA glycosylase (255 aa).

D90 (proton acceptor) is an active-site residue.

The protein belongs to the uracil-DNA glycosylase (UDG) superfamily. UNG family.

The protein resides in the host nucleus. The enzyme catalyses Hydrolyzes single-stranded DNA or mismatched double-stranded DNA and polynucleotides, releasing free uracil.. In terms of biological role, excises uracil residues from the DNA which can arise as a result of misincorporation of dUMP residues by DNA polymerase or deamination of cytosines. Therefore may reduce deleterious uracil incorporation into the viral genome, particularly in terminally differentiated cells which lack DNA repair enzymes. This Equine herpesvirus 2 (strain 86/87) (EHV-2) protein is Uracil-DNA glycosylase.